The primary structure comprises 548 residues: Acetylcholine receptor subunit alpha-type des-2 (548 aa).

An N-terminal signal peptide occupies residues 1–19; sequence MLIIIQSLLLATTASLCIA. Residues 21-239 are Extracellular-facing; sequence TPVPTQIRLV…LTLYLRRKPL (219 aa). N-linked (GlcNAc...) asparagine glycosylation is found at N52, N96, and N224. Transmembrane regions (helical) follow at residues 240-260, 274-294, and 301-321; these read FYLV…IVGF, VSLG…VSDQ, and FIPL…LGTV. Positions 422–460 are disordered; that stretch reads LIHLSPTAHQPDESISPSAPPVPSSSPLPPPLTPGPADD. Positions 439–455 are enriched in pro residues; sequence SAPPVPSSSPLPPPLTP. A helical membrane pass occupies residues 517-537; that stretch reads FVIFVVAFLIITFGINFIGFI. At 538-548 the chain is on the cytoplasmic side; the sequence is HWHQAGVEYGG.

This sequence belongs to the ligand-gated ion channel (TC 1.A.9) family. Acetylcholine receptor (TC 1.A.9.1) subfamily. As to quaternary structure, the functional receptor is a heteromer of deg-3 and des-2. Interacts with ric-3; which is required for proper receptor folding.

It is found in the cell membrane. Functionally, subunit of the non-synaptic neuronal acetylcholine receptor (AChR), which may play a role in chemotaxis towards choline. After binding choline or acetylcholine, the AChR responds by an extensive change in conformation that affects all subunits and leads to opening of an ion-conducting channel across the plasma membrane. This is Acetylcholine receptor subunit alpha-type des-2 (des-2) from Caenorhabditis elegans.